Here is a 202-residue protein sequence, read N- to C-terminus: Superoxide dismutase [Mn/Fe] (202 aa).

Residues His26, His80, Asp163, and His167 each coordinate Fe(3+). Residues His26, His80, Asp163, and His167 each coordinate Mn(2+).

Belongs to the iron/manganese superoxide dismutase family. Homodimer. Requires Mn(2+) as cofactor. The cofactor is Fe(3+).

The catalysed reaction is 2 superoxide + 2 H(+) = H2O2 + O2. Functionally, destroys superoxide anion radicals which are normally produced within the cells and which are toxic to biological systems. Catalyzes the dismutation of superoxide anion radicals into O2 and H2O2 by successive reduction and oxidation of the transition metal ion at the active site. This chain is Superoxide dismutase [Mn/Fe] (sodB), found in Methylomonas sp. (strain J).